A 1157-amino-acid polypeptide reads, in one-letter code: Voltage-dependent calcium channel subunit alpha-2/delta-2 (1157 aa).

Residues 1 to 18 (MAVPARTCGASWPGPVRT) form the signal peptide. The interval 1–37 (MAVPARTCGASWPGPVRTARPWPGRGPRPCPDPRGPA) is disordered. At 19–1119 (ARPWPGRGPR…TEDTSDCGRG (1101 aa)) the chain is on the extracellular side. A compositionally biased stretch (pro residues) spans 24 to 34 (GRGPRPCPDPR). Residue asparagine 205 is glycosylated (N-linked (GlcNAc...) asparagine). The 179-residue stretch at 294–472 (DMVIIVDVSG…INTQEYLDVL (179 aa)) folds into the VWFA domain. Positions 300, 302, and 304 each coordinate a divalent metal cation. Positions 300–304 (DVSGS) match the MIDAS-like motif motif. Residues asparagine 389, asparagine 421, asparagine 510, asparagine 543, asparagine 627, and asparagine 864 are each glycosylated (N-linked (GlcNAc...) asparagine). A disulfide bridge links cysteine 446 with cysteine 1104. A Cache domain is found at 488-577 (WTNVYEDALG…KPQITNFREP (90 aa)). Residues 1120 to 1140 (ASFPPSLGVLVSLQLLLLLGL) form a helical membrane-spanning segment. The Cytoplasmic portion of the chain corresponds to 1141–1157 (PPRPQPQIHSFTPSRRL).

Belongs to the calcium channel subunit alpha-2/delta family. As to quaternary structure, dimer formed of alpha-2-2 and delta-2 chains; disulfide-linked. Voltage-dependent calcium channels are multisubunit complexes, consisting of alpha-1 (CACNA1), alpha-2 (CACNA2D), beta (CACNB) and delta (CACNA2D) subunits in a 1:1:1:1 ratio. N-glycosylated. In terms of processing, may be proteolytically processed into subunits alpha-2-2 and delta-2 that are disulfide-linked. It is however unclear whether such cleavage really takes place in vivo and has a functional role. As to expression, in heart, it is highly expressed in atrium and at lower level in ventricle.

It is found in the membrane. In terms of biological role, the alpha-2/delta subunit of voltage-dependent calcium channels regulates calcium current density and activation/inactivation kinetics of the calcium channel. Acts as a regulatory subunit for P/Q-type calcium channel (CACNA1A), N-type (CACNA1B), L-type (CACNA1C OR CACNA1D) and possibly T-type (CACNA1G). Overexpression induces apoptosis. This chain is Voltage-dependent calcium channel subunit alpha-2/delta-2 (Cacna2d2), found in Rattus norvegicus (Rat).